We begin with the raw amino-acid sequence, 390 residues long: Cytochrome b (390 aa).

The next 4 membrane-spanning stretches (helical) occupy residues methionine 32–methionine 52, tryptophan 76–glycine 98, leucine 113–cysteine 133, and phenylalanine 179–methionine 199. Residues histidine 82 and histidine 96 each coordinate heme b. Residues histidine 183 and histidine 197 each contribute to the heme b site. An a ubiquinone-binding site is contributed by histidine 202. 4 helical membrane-spanning segments follow: residues phenylalanine 225–phenylalanine 245, leucine 289–aspartate 309, leucine 321–alanine 341, and tyrosine 348–proline 368.

Belongs to the cytochrome b family. Fungal cytochrome b-c1 complex contains 10 subunits; 3 respiratory subunits, 2 core proteins and 5 low-molecular weight proteins. Cytochrome b-c1 complex is a homodimer. The cofactor is heme b.

It localises to the mitochondrion inner membrane. In terms of biological role, component of the ubiquinol-cytochrome c reductase complex (complex III or cytochrome b-c1 complex) that is part of the mitochondrial respiratory chain. The b-c1 complex mediates electron transfer from ubiquinol to cytochrome c. Contributes to the generation of a proton gradient across the mitochondrial membrane that is then used for ATP synthesis. This Naumovozyma castellii (Yeast) protein is Cytochrome b (COB).